A 199-amino-acid polypeptide reads, in one-letter code: Probable cobalt-precorrin-6B C(15)-methyltransferase (decarboxylating) (199 aa).

Residues Thr-24, 48–52 (GCGTG), Asp-72, and Ala-101 each bind S-adenosyl-L-methionine.

Belongs to the methyltransferase superfamily. Archaeal-type CbiT family.

The catalysed reaction is Co-precorrin-6B + S-adenosyl-L-methionine = Co-precorrin-7 + S-adenosyl-L-homocysteine + CO2. The protein operates within cofactor biosynthesis; adenosylcobalamin biosynthesis; cob(II)yrinate a,c-diamide from sirohydrochlorin (anaerobic route): step 8/10. In terms of biological role, catalyzes the methylation of C-15 in cobalt-precorrin-6B followed by the decarboxylation of C-12 to form cobalt-precorrin-7. This is Probable cobalt-precorrin-6B C(15)-methyltransferase (decarboxylating) from Saccharolobus islandicus (strain Y.N.15.51 / Yellowstone #2) (Sulfolobus islandicus).